A 332-amino-acid polypeptide reads, in one-letter code: Ribosomal RNA small subunit methyltransferase C (332 aa).

Belongs to the methyltransferase superfamily. RsmC family. As to quaternary structure, monomer.

The protein localises to the cytoplasm. The enzyme catalyses guanosine(1207) in 16S rRNA + S-adenosyl-L-methionine = N(2)-methylguanosine(1207) in 16S rRNA + S-adenosyl-L-homocysteine + H(+). Its function is as follows. Specifically methylates the guanine in position 1207 of 16S rRNA in the 30S particle. This Pseudomonas aeruginosa (strain UCBPP-PA14) protein is Ribosomal RNA small subunit methyltransferase C.